We begin with the raw amino-acid sequence, 272 residues long: 2-amino-3,7-dideoxy-D-threo-hept-6-ulosonate synthase (272 aa).

Aspartate 33 functions as the Proton acceptor in the catalytic mechanism. Residues 33-37 (DHGVS) and 153-155 (YPR) each bind 1-deoxy-D-threo-hexo-2,5-diulose 6-phosphate. Tyrosine 153 (proton donor) is an active-site residue. Lysine 184 functions as the Schiff-base intermediate with substrate in the catalytic mechanism. 1-deoxy-D-threo-hexo-2,5-diulose 6-phosphate-binding positions include 209–210 (GG) and 237–238 (GR).

The protein belongs to the DeoC/FbaB aldolase family. ADHS subfamily. In terms of assembly, homodecamer.

It catalyses the reaction 1-deoxy-D-threo-hexo-2,5-diulose 6-phosphate + L-aspartate 4-semialdehyde = 2,3-dioxopropyl phosphate + 2-amino-2,3,7-trideoxy-D-lyxo-hept-6-ulosonate. Its function is as follows. Catalyzes a transaldol reaction between 6-deoxy-5-ketofructose 1-phosphate (DKFP) and L-aspartate semialdehyde (ASA) with an elimination of hydroxypyruvaldehyde phosphate to yield 2-amino-3,7-dideoxy-D-threo-hept-6-ulosonate (ADH). Plays a key role in an alternative pathway of the biosynthesis of 3-dehydroquinate (DHQ), which is involved in the canonical pathway for the biosynthesis of aromatic amino acids and which is also a precursor for the biosynthesis of p-aminobenzoic acid (PABA) in M.maripaludis. Does not possess fructose-bisphosphate (FBP) aldolase activity. In Methanococcus maripaludis (strain DSM 14266 / JCM 13030 / NBRC 101832 / S2 / LL), this protein is 2-amino-3,7-dideoxy-D-threo-hept-6-ulosonate synthase.